We begin with the raw amino-acid sequence, 117 residues long: MTHWLCFTLALVAVRGVLSEIQLVESGGAIRKPGDSLRLSCKASGFTFSDTWMAWARQPPGKGLQWVGEINGNSETIRYAPEVKGRLTISRDNTQNLLFLQISSLKPEDTATYYCAR.

The first 19 residues, 1–19, serve as a signal peptide directing secretion; sequence MTHWLCFTLALVAVRGVLS. Positions 20-49 are framework-1; it reads EIQLVESGGAIRKPGDSLRLSCKASGFTFS. The cysteines at positions 41 and 115 are disulfide-linked. A complementarity-determining-1 region spans residues 50 to 54; that stretch reads DTWMA. Positions 55 to 68 are framework-2; it reads WARQPPGKGLQWVG. A complementarity-determining-2 region spans residues 69 to 85; it reads EINGNSETIRYAPEVKG. The framework-3 stretch occupies residues 86–117; it reads RLTISRDNTQNLLFLQISSLKPEDTATYYCAR.

The polypeptide is Ig heavy chain V region G4 (G4) (Caiman crocodilus (Spectacled caiman)).